Consider the following 250-residue polypeptide: Probable transcriptional regulatory protein SYNPCC7002_A1640 (250 aa).

It belongs to the TACO1 family.

The protein resides in the cytoplasm. The sequence is that of Probable transcriptional regulatory protein SYNPCC7002_A1640 from Picosynechococcus sp. (strain ATCC 27264 / PCC 7002 / PR-6) (Agmenellum quadruplicatum).